We begin with the raw amino-acid sequence, 767 residues long: Probable NADP-dependent malic enzyme (767 aa).

The malic enzyme stretch occupies residues 1–430 (MDEMNKINYT…QLGSRLNPTA (430 aa)). The Proton donor role is filled by Tyr-42. The active-site Proton acceptor is Lys-97. 3 residues coordinate a divalent metal cation: Glu-139, Asp-140, and Asp-165. Residues 198 to 201 (AGAA), Asn-290, and Asn-322 contribute to the NADP(+) site. Residues 431–767 (NYMNFLAEKI…FACVEAIKEV (337 aa)) form a phosphate acetyltransferase region.

The protein in the N-terminal section; belongs to the malic enzymes family. It in the C-terminal section; belongs to the phosphate acetyltransferase and butyryltransferase family. Mg(2+) serves as cofactor. It depends on Mn(2+) as a cofactor.

It carries out the reaction (S)-malate + NADP(+) = pyruvate + CO2 + NADPH. It catalyses the reaction oxaloacetate + H(+) = pyruvate + CO2. This Rickettsia prowazekii (strain Madrid E) protein is Probable NADP-dependent malic enzyme.